We begin with the raw amino-acid sequence, 206 residues long: MAAARCLRWGLSRAEAWLLPPPTSCCHRALHRQVEGTEFRSAYSLDKLYPESRGADTAWRVPGDAKQGNDDIPVDRLTISYCRSSGPGGQNVNKVNSKAEVRFHLASADWIAEPVRQKMALTHKNKINRAGELILTSEYSRYQFRNLADCLQKIRDMIAEASQPATEPSKEDAALQKLRIENMNRERLRKKRINSAIKTSRRVGTD.

The N-terminal 29 residues, 1–29 (MAAARCLRWGLSRAEAWLLPPPTSCCHRA), are a transit peptide targeting the mitochondrion. Glutamine 90 carries the N5-methylglutamine modification.

This sequence belongs to the prokaryotic/mitochondrial release factor family. Mitochondrion-specific ribosomal protein mL62 subfamily. In terms of assembly, component of the mitochondrial ribosome large subunit (39S) which comprises a 16S rRNA and about 50 distinct proteins. In terms of processing, methylation of glutamine in the GGQ triplet by HEMK1.

The protein localises to the mitochondrion. The enzyme catalyses an N-acyl-L-alpha-aminoacyl-tRNA + H2O = an N-acyl-L-amino acid + a tRNA + H(+). Essential peptidyl-tRNA hydrolase component of the mitochondrial large ribosomal subunit. Acts as a codon-independent translation release factor that has lost all stop codon specificity and directs the termination of translation in mitochondrion, possibly in case of abortive elongation. May be involved in the hydrolysis of peptidyl-tRNAs that have been prematurely terminated and thus in the recycling of stalled mitochondrial ribosomes. The protein is Large ribosomal subunit protein mL62 of Bos taurus (Bovine).